A 153-amino-acid polypeptide reads, in one-letter code: Ubiquitin/ISG15-conjugating enzyme E2 L6 (153 aa).

The 148-residue stretch at 2-149 folds into the UBC core domain; sequence TASKRVAKEL…AEEFTLQYGV (148 aa). Cys86 acts as the Glycyl thioester intermediate in catalysis.

It belongs to the ubiquitin-conjugating enzyme family. In terms of assembly, interacts with RNF19A, RNF19B and RNF144B. Interacts with FLT3 (tyrosine phosphorylated). In terms of processing, ISGylated.

It carries out the reaction S-ubiquitinyl-[E1 ubiquitin-activating enzyme]-L-cysteine + [E2 ubiquitin-conjugating enzyme]-L-cysteine = [E1 ubiquitin-activating enzyme]-L-cysteine + S-ubiquitinyl-[E2 ubiquitin-conjugating enzyme]-L-cysteine.. It participates in protein modification; protein ubiquitination. Catalyzes the covalent attachment of ubiquitin to other proteins. Functions in the E6/E6-AP-induced ubiquitination of p53/TP53. Promotes ubiquitination and subsequent proteasomal degradation of FLT3. This Rattus norvegicus (Rat) protein is Ubiquitin/ISG15-conjugating enzyme E2 L6 (Ube2l6).